Consider the following 360-residue polypeptide: Protein RecA (360 aa).

An ATP-binding site is contributed by 64–71 (GHESSGKT). Positions 333–360 (QEQVQPEPKSKQSKSKQASEQATQDELI) are disordered.

This sequence belongs to the RecA family.

The protein localises to the cytoplasm. In terms of biological role, can catalyze the hydrolysis of ATP in the presence of single-stranded DNA, the ATP-dependent uptake of single-stranded DNA by duplex DNA, and the ATP-dependent hybridization of homologous single-stranded DNAs. It interacts with LexA causing its activation and leading to its autocatalytic cleavage. The sequence is that of Protein RecA from Francisella philomiragia subsp. philomiragia (strain ATCC 25017 / CCUG 19701 / FSC 153 / O#319-036).